The following is a 94-amino-acid chain: Putative regulatory protein THA_332 (94 aa).

This sequence belongs to the RemA family.

The protein is Putative regulatory protein THA_332 of Thermosipho africanus (strain TCF52B).